Reading from the N-terminus, the 413-residue chain is Serine hydroxymethyltransferase (413 aa).

Residues Leu-119 and 123–125 (GHL) contribute to the (6S)-5,6,7,8-tetrahydrofolate site. N6-(pyridoxal phosphate)lysine is present on Lys-228. Residue 351 to 353 (SPF) coordinates (6S)-5,6,7,8-tetrahydrofolate.

Belongs to the SHMT family. In terms of assembly, homodimer. Pyridoxal 5'-phosphate is required as a cofactor.

It is found in the cytoplasm. The catalysed reaction is (6R)-5,10-methylene-5,6,7,8-tetrahydrofolate + glycine + H2O = (6S)-5,6,7,8-tetrahydrofolate + L-serine. Its pathway is one-carbon metabolism; tetrahydrofolate interconversion. It participates in amino-acid biosynthesis; glycine biosynthesis; glycine from L-serine: step 1/1. Its function is as follows. Catalyzes the reversible interconversion of serine and glycine with tetrahydrofolate (THF) serving as the one-carbon carrier. This reaction serves as the major source of one-carbon groups required for the biosynthesis of purines, thymidylate, methionine, and other important biomolecules. Also exhibits THF-independent aldolase activity toward beta-hydroxyamino acids, producing glycine and aldehydes, via a retro-aldol mechanism. In Anoxybacillus flavithermus (strain DSM 21510 / WK1), this protein is Serine hydroxymethyltransferase.